Here is a 1138-residue protein sequence, read N- to C-terminus: Nonsense-mediated mRNA decay factor SMG7 (1138 aa).

S2 is subject to N-acetylserine. TPR repeat units follow at residues 152-185 (QHCL…VPSN) and 187-219 (QPYN…KFPF). Disordered stretches follow at residues 515–612 (ATDG…LPSR), 649–745 (STAH…YQQA), 838–871 (QPNM…KSSP), 990–1090 (SLPA…PSME), and 1106–1138 (SSMM…NPPH). S519 carries the phosphoserine modification. Positions 525–537 (VLSTGRNPSNSCD) are enriched in polar residues. A compositionally biased stretch (basic and acidic residues) spans 548 to 582 (ENIKPREVNQGRSFPPKEVKSQTELRKTPVSEARK). T575 carries the phosphothreonine modification. 2 stretches are compositionally biased toward polar residues: residues 584–597 (PVTQ…NSQF) and 649–673 (STAH…SQQR). Positions 674–721 (PSGPGPMNQGPQQSQPPSQPPLTSLPAQPTAQSTSQLQVQALAQQQQS) are enriched in low complexity. A phosphoserine mark is found at S732 and S848. Positions 854 to 868 (PEQDPVPRMPFEDPK) are enriched in basic and acidic residues. The segment covering 990-999 (SLPASSDHST) has biased composition (polar residues). Residues 1000–1026 (PASQSPHSSNPSSLPSSPPTHNHNSAP) are compositionally biased toward low complexity. A compositionally biased stretch (basic and acidic residues) spans 1037–1051 (DNRDRRPADRWKTDK). Over residues 1063–1082 (SATSSSESSWHQASTPSGTW) the composition is skewed to polar residues. Low complexity predominate over residues 1118 to 1132 (QLLMQQKQKQQRGQG).

Part of a complex that contains SMG5, SMG7, PPP2CA, a short isoform of UPF3A (isoform UPF3AS, but not isoform UPF3AL) and phosphorylated UPF1. Interacts with DHX34; the interaction is RNA-independent.

The protein localises to the cytoplasm. It localises to the nucleus. Functionally, plays a role in nonsense-mediated mRNA decay. Recruits UPF1 to cytoplasmic mRNA decay bodies. Together with SMG5 is thought to provide a link to the mRNA degradation machinery involving exonucleolytic pathways, and to serve as an adapter for UPF1 to protein phosphatase 2A (PP2A), thereby triggering UPF1 dephosphorylation. This Mus musculus (Mouse) protein is Nonsense-mediated mRNA decay factor SMG7.